We begin with the raw amino-acid sequence, 369 residues long: Trichocyst matrix protein T1-B (369 aa).

The first 16 residues, 1–16 (MYKLAVCTLLILSVTA), serve as a signal peptide directing secretion. Residues 17 to 55 (IDVTNSVWTSHDQKAFAQIKQSGWGNFILNFGELHLQTG) constitute a propeptide that is removed on maturation. A coiled-coil region spans residues 56–180 (GILAELNTEI…AIDESLQLLS (125 aa)). Positions 190 to 225 (IQKVQKNLTKIQQSLKRHSTFQTFIKTLLEIAVEAN) are excised as a propeptide. Residues 262–354 (KDFEARVIQL…AHQALDLLNQ (93 aa)) are a coiled coil.

This sequence belongs to the TMP family. In terms of processing, two components are produced by post-translational processing from the precursor peptide.

It is found in the trichocyst. Functionally, structural protein that crystallize inside the trichocyst matrix. The protein is Trichocyst matrix protein T1-B (T1B) of Paramecium tetraurelia.